Here is a 175-residue protein sequence, read N- to C-terminus: NADH-ubiquinone oxidoreductase chain 6 (175 aa).

The next 5 helical transmembrane spans lie at 1 to 21 (MTMYIAFILSTIFVIGFVGFS), 25 to 45 (SPIYGGLGLIVSGGVGCGIVL), 47 to 67 (FGGSFLGLMVFLIYLGGMLVV), 88 to 108 (TVFGAFVSGLMMEFCMVYYAL), and 149 to 169 (YGTWLVIVTGWSLLIGVVVIM).

The protein belongs to the complex I subunit 6 family. As to quaternary structure, core subunit of respiratory chain NADH dehydrogenase (Complex I) which is composed of 45 different subunits.

The protein resides in the mitochondrion inner membrane. The enzyme catalyses a ubiquinone + NADH + 5 H(+)(in) = a ubiquinol + NAD(+) + 4 H(+)(out). Functionally, core subunit of the mitochondrial membrane respiratory chain NADH dehydrogenase (Complex I) which catalyzes electron transfer from NADH through the respiratory chain, using ubiquinone as an electron acceptor. Essential for the catalytic activity and assembly of complex I. In Sus scrofa (Pig), this protein is NADH-ubiquinone oxidoreductase chain 6 (MT-ND6).